Consider the following 460-residue polypeptide: Adenylyltransferase and sulfurtransferase MOCS3 (460 aa).

Residues glycine 92, aspartate 113, 120-124 (SNLAR), lysine 137, and 181-182 (DN) contribute to the ATP site. The tract at residues 158–238 (PRALAEDWAL…RPPPPETVTN (81 aa)) is interaction with NFS1. Cysteine 222 and cysteine 225 together coordinate Zn(2+). Catalysis depends on cysteine 239, which acts as the Glycyl thioester intermediate; for adenylyltransferase activity. Cysteine 297 and cysteine 300 together coordinate Zn(2+). A disulfide bridge connects residues cysteine 316 and cysteine 324. One can recognise a Rhodanese domain in the interval 347–458 (SGAPHVLLDV…WAAKIDGTFP (112 aa)). Catalysis depends on cysteine 412, which acts as the Cysteine persulfide intermediate; for sulfurtransferase activity. Cysteine 412 bears the Cysteine persulfide mark.

This sequence in the N-terminal section; belongs to the HesA/MoeB/ThiF family. UBA4 subfamily. In terms of assembly, interacts with NFS1. Zn(2+) is required as a cofactor.

It is found in the cytoplasm. The protein localises to the cytosol. The catalysed reaction is [molybdopterin-synthase sulfur-carrier protein]-C-terminal Gly-Gly + ATP + H(+) = [molybdopterin-synthase sulfur-carrier protein]-C-terminal Gly-Gly-AMP + diphosphate. The enzyme catalyses [molybdopterin-synthase sulfur-carrier protein]-C-terminal Gly-Gly-AMP + S-sulfanyl-L-cysteinyl-[cysteine desulfurase] + AH2 = [molybdopterin-synthase sulfur-carrier protein]-C-terminal-Gly-aminoethanethioate + L-cysteinyl-[cysteine desulfurase] + A + AMP + 2 H(+). The protein operates within tRNA modification; 5-methoxycarbonylmethyl-2-thiouridine-tRNA biosynthesis. It participates in cofactor biosynthesis; molybdopterin biosynthesis. Functionally, plays a central role in 2-thiolation of mcm(5)S(2)U at tRNA wobble positions of cytosolic tRNA(Lys), tRNA(Glu) and tRNA(Gln). Also essential during biosynthesis of the molybdenum cofactor. Acts by mediating the C-terminal thiocarboxylation of sulfur carriers URM1 and MOCS2A. Its N-terminus first activates URM1 and MOCS2A as acyl-adenylates (-COAMP), then the persulfide sulfur on the catalytic cysteine is transferred to URM1 and MOCS2A to form thiocarboxylation (-COSH) of their C-terminus. The reaction probably involves hydrogen sulfide that is generated from the persulfide intermediate and that acts as a nucleophile towards URM1 and MOCS2A. Subsequently, a transient disulfide bond is formed. Does not use thiosulfate as sulfur donor; NFS1 acting as a sulfur donor for thiocarboxylation reactions. This Mus musculus (Mouse) protein is Adenylyltransferase and sulfurtransferase MOCS3 (Mocs3).